The sequence spans 386 residues: 1-deoxy-D-xylulose 5-phosphate reductoisomerase (386 aa).

NADPH contacts are provided by Ser10, Gly11, Ser12, Val13, Asn38, and Asn120. Residue Lys121 coordinates 1-deoxy-D-xylulose 5-phosphate. Glu122 serves as a coordination point for NADPH. A Mn(2+)-binding site is contributed by Asp146. 1-deoxy-D-xylulose 5-phosphate contacts are provided by Ser147, Glu148, Ser172, and His195. Glu148 serves as a coordination point for Mn(2+). Position 201 (Gly201) interacts with NADPH. Residues Ser208, Asn213, Lys214, and Glu217 each coordinate 1-deoxy-D-xylulose 5-phosphate. Glu217 is a binding site for Mn(2+).

This sequence belongs to the DXR family. It depends on Mg(2+) as a cofactor. The cofactor is Mn(2+).

It catalyses the reaction 2-C-methyl-D-erythritol 4-phosphate + NADP(+) = 1-deoxy-D-xylulose 5-phosphate + NADPH + H(+). It functions in the pathway isoprenoid biosynthesis; isopentenyl diphosphate biosynthesis via DXP pathway; isopentenyl diphosphate from 1-deoxy-D-xylulose 5-phosphate: step 1/6. In terms of biological role, catalyzes the NADPH-dependent rearrangement and reduction of 1-deoxy-D-xylulose-5-phosphate (DXP) to 2-C-methyl-D-erythritol 4-phosphate (MEP). This Leptospira biflexa serovar Patoc (strain Patoc 1 / Ames) protein is 1-deoxy-D-xylulose 5-phosphate reductoisomerase.